The following is a 273-amino-acid chain: Putative pyruvate, phosphate dikinase regulatory protein (273 aa).

149-156 (GPSRTSKT) contacts ADP.

It belongs to the pyruvate, phosphate/water dikinase regulatory protein family. PDRP subfamily.

The catalysed reaction is N(tele)-phospho-L-histidyl/L-threonyl-[pyruvate, phosphate dikinase] + ADP = N(tele)-phospho-L-histidyl/O-phospho-L-threonyl-[pyruvate, phosphate dikinase] + AMP + H(+). It catalyses the reaction N(tele)-phospho-L-histidyl/O-phospho-L-threonyl-[pyruvate, phosphate dikinase] + phosphate + H(+) = N(tele)-phospho-L-histidyl/L-threonyl-[pyruvate, phosphate dikinase] + diphosphate. Its function is as follows. Bifunctional serine/threonine kinase and phosphorylase involved in the regulation of the pyruvate, phosphate dikinase (PPDK) by catalyzing its phosphorylation/dephosphorylation. The sequence is that of Putative pyruvate, phosphate dikinase regulatory protein from Rickettsia rickettsii (strain Iowa).